Here is a 255-residue protein sequence, read N- to C-terminus: NAD kinase (255 aa).

The active-site Proton acceptor is the Asp-44. NAD(+)-binding positions include 44 to 45, His-49, 114 to 115, Asp-144, Ala-152, 155 to 160, and Gln-216; these read DG, NE, and SAYNLS.

This sequence belongs to the NAD kinase family. Requires a divalent metal cation as cofactor.

It localises to the cytoplasm. It carries out the reaction NAD(+) + ATP = ADP + NADP(+) + H(+). Its function is as follows. Involved in the regulation of the intracellular balance of NAD and NADP, and is a key enzyme in the biosynthesis of NADP. Catalyzes specifically the phosphorylation on 2'-hydroxyl of the adenosine moiety of NAD to yield NADP. The chain is NAD kinase from Rickettsia bellii (strain OSU 85-389).